We begin with the raw amino-acid sequence, 210 residues long: Thymidylate kinase (210 aa).

ATP is bound at residue 11-18 (GLEGAGKS).

The protein belongs to the thymidylate kinase family.

It catalyses the reaction dTMP + ATP = dTDP + ADP. Phosphorylation of dTMP to form dTDP in both de novo and salvage pathways of dTTP synthesis. In Histophilus somni (strain 129Pt) (Haemophilus somnus), this protein is Thymidylate kinase.